A 627-amino-acid polypeptide reads, in one-letter code: tRNA uridine 5-carboxymethylaminomethyl modification enzyme MnmG (627 aa).

14–19 (GAGHAG) serves as a coordination point for FAD. Residue 275–289 (GPRYCPSIEDKVVKF) coordinates NAD(+).

This sequence belongs to the MnmG family. In terms of assembly, homodimer. Heterotetramer of two MnmE and two MnmG subunits. FAD serves as cofactor.

It localises to the cytoplasm. Functionally, NAD-binding protein involved in the addition of a carboxymethylaminomethyl (cmnm) group at the wobble position (U34) of certain tRNAs, forming tRNA-cmnm(5)s(2)U34. The sequence is that of tRNA uridine 5-carboxymethylaminomethyl modification enzyme MnmG from Lachnoclostridium phytofermentans (strain ATCC 700394 / DSM 18823 / ISDg) (Clostridium phytofermentans).